The sequence spans 363 residues: Mannose-1-phosphate guanyltransferase (363 aa).

Belongs to the transferase hexapeptide repeat family.

The protein localises to the cytoplasm. The catalysed reaction is alpha-D-mannose 1-phosphate + GTP + H(+) = GDP-alpha-D-mannose + diphosphate. It functions in the pathway nucleotide-sugar biosynthesis; GDP-alpha-D-mannose biosynthesis; GDP-alpha-D-mannose from alpha-D-mannose 1-phosphate (GTP route): step 1/1. Functionally, involved in cell wall synthesis where it is required for glycosylation. Involved in cell cycle progression through cell-size checkpoint. This Yarrowia lipolytica (strain CLIB 122 / E 150) (Yeast) protein is Mannose-1-phosphate guanyltransferase (MPG1).